Reading from the N-terminus, the 120-residue chain is Protein BEX4 (120 aa).

The disordered stretch occupies residues 1–54 (MESKEELAANNLNGENAQQENEGGEQAPTQNEEESRHLGGGEGQKPGGNIRRGR). The segment covering 8-27 (AANNLNGENAQQENEGGEQA) has biased composition (low complexity). The tract at residues 31–90 (NEEESRHLGGGEGQKPGGNIRRGRVRRLVPNFRWAIPNRHIEHNEARDDVERFVGQMMEI) is interaction with SIRT2. The tract at residues 31-120 (NEEESRHLGG…DNHYDFCLIP (90 aa)) is interaction with alpha-tubulin. Residue Cys117 coordinates Zn(2+).

This sequence belongs to the BEX family. In terms of assembly, interacts with alpha-tubulin. Interacts with SIRT2. Post-translationally, ubiquitinated and degraded by the proteasome. Very high expression in heart, skeletal muscle, liver, and kidney. The levels of expression are uniform throughout the brain.

It localises to the cytoplasm. The protein resides in the cytoskeleton. Its subcellular location is the spindle pole. The protein localises to the nucleus. In terms of biological role, may play a role in microtubule deacetylation by negatively regulating the SIRT2 deacetylase activity toward alpha-tubulin and thereby participate in the control of cell cycle progression and genomic stability. In absence of reductive stress, acts as a pseudosubstrate for the CRL2(FEM1B) complex: associates with FEM1B via zinc, thereby preventing association between FEM1B and its substrates. The sequence is that of Protein BEX4 from Homo sapiens (Human).